A 467-amino-acid polypeptide reads, in one-letter code: Probable endopeptidase p60 (467 aa).

The N-terminal stretch at 1 to 27 is a signal peptide; the sequence is MNMKKATIAATAGIAVTAFAAPTIASA. In terms of domain architecture, LysM 1 spans 28–71; the sequence is STVVVEAGDTLWGIAQSKGTTVDAIKKANNLTTDKIVPGQKLQV. Residues 79-143 enclose the SH3b domain; the sequence is KAEKSVSATW…VNGKYLTDKA (65 aa). 2 disordered regions span residues 154 to 199 and 247 to 348; these read KKET…QNAT and KTVA…GSTN. The segment covering 172-185 has biased composition (low complexity); the sequence is KQPTTQQTAPAPKA. Residues 199–242 enclose the LysM 2 domain; that stretch reads TTHNVKSGDTIWALSVKYGVSVQDIMSWNNLSSSSIYVGQKLAI. Residues 288–348 show a composition bias toward low complexity; the sequence is TEQQTTTKAP…NTNTNQGSTN (61 aa). A 7 X 2 AA tandem repeats of T-N region spans residues 330 to 343; sequence TNTNTNTNTNTNTN. A NlpC/P60 domain is found at 349-467; sequence NASASALIAE…GKFLVGFGRV (119 aa). Cys379 (nucleophile) is an active-site residue. The active-site Proton acceptor is His429. Asn441 is a catalytic residue.

The protein belongs to the peptidase C40 family.

Its function is as follows. This major extracellular protein may be involved in the invasion of non-professional phagocytic cells by Listeria. The polypeptide is Probable endopeptidase p60 (iap) (Listeria innocua serovar 6a (strain ATCC BAA-680 / CLIP 11262)).